The chain runs to 457 residues: MADS-box transcription factor 1 (457 aa).

Residues Pro-11–Glu-71 enclose the MADS-box domain. 2 disordered regions span residues Ser-195–His-278 and Ser-295–Glu-328. A compositionally biased stretch (low complexity) spans Ser-199 to Glu-216. The segment covering Leu-218–Asn-234 has biased composition (polar residues). Over residues Lys-265–His-278 the composition is skewed to basic residues. A compositionally biased stretch (polar residues) spans Ser-295–Thr-317. At Ser-372 the chain carries Phosphoserine.

Post-translationally, phosphorylated. Occurs periodically during mitosis.

Its subcellular location is the nucleus. In terms of biological role, acts as a transcriptional activator with a role in the regulation of mitosis. Regulates septation and the periodic transcription of cdc15. This is MADS-box transcription factor 1 (mbx1) from Schizosaccharomyces pombe (strain 972 / ATCC 24843) (Fission yeast).